A 245-amino-acid polypeptide reads, in one-letter code: Pyridoxine 5'-phosphate synthase (245 aa).

Residue asparagine 9 participates in 3-amino-2-oxopropyl phosphate binding. 11 to 12 (DH) lines the 1-deoxy-D-xylulose 5-phosphate pocket. 3-amino-2-oxopropyl phosphate is bound at residue arginine 20. Histidine 45 (proton acceptor) is an active-site residue. The 1-deoxy-D-xylulose 5-phosphate site is built by arginine 47 and histidine 52. Glutamate 72 functions as the Proton acceptor in the catalytic mechanism. Residue threonine 102 coordinates 1-deoxy-D-xylulose 5-phosphate. The Proton donor role is filled by histidine 193. Residues glycine 194 and 215–216 (GH) contribute to the 3-amino-2-oxopropyl phosphate site.

Belongs to the PNP synthase family. Homooctamer; tetramer of dimers.

It is found in the cytoplasm. The catalysed reaction is 3-amino-2-oxopropyl phosphate + 1-deoxy-D-xylulose 5-phosphate = pyridoxine 5'-phosphate + phosphate + 2 H2O + H(+). The protein operates within cofactor biosynthesis; pyridoxine 5'-phosphate biosynthesis; pyridoxine 5'-phosphate from D-erythrose 4-phosphate: step 5/5. Its function is as follows. Catalyzes the complicated ring closure reaction between the two acyclic compounds 1-deoxy-D-xylulose-5-phosphate (DXP) and 3-amino-2-oxopropyl phosphate (1-amino-acetone-3-phosphate or AAP) to form pyridoxine 5'-phosphate (PNP) and inorganic phosphate. The polypeptide is Pyridoxine 5'-phosphate synthase (Shewanella oneidensis (strain ATCC 700550 / JCM 31522 / CIP 106686 / LMG 19005 / NCIMB 14063 / MR-1)).